The chain runs to 437 residues: Phosphatidylserine decarboxylase proenzyme 1, mitochondrial (437 aa).

Residues 1–18 (MLKFHRNVKPQFGAFARY) constitute a mitochondrion transit peptide. Over 19–38 (SSLGKHNSRKRVGIIRLAYG) the chain is Mitochondrial matrix. The helical transmembrane segment at 39–57 (LTGIGLVGLAGFAWAQDRH) threads the bilayer. The Mitochondrial intermembrane segment spans residues 58–437 (EKTYQKKGVQ…PLGRVVPSSH (380 aa)). Active-site charge relay system; for autoendoproteolytic cleavage activity residues include aspartate 157, histidine 287, and serine 401. Serine 401 (schiff-base intermediate with substrate; via pyruvic acid; for decarboxylase activity) is an active-site residue. Serine 401 bears the Pyruvic acid (Ser); by autocatalysis mark.

Belongs to the phosphatidylserine decarboxylase family. PSD-B subfamily. Eukaryotic type I sub-subfamily. Heterodimer of a large membrane-associated beta subunit and a small pyruvoyl-containing alpha subunit. Requires pyruvate as cofactor. In terms of processing, is synthesized initially as an inactive proenzyme. Formation of the active enzyme involves a self-maturation process in which the active site pyruvoyl group is generated from an internal serine residue via an autocatalytic post-translational modification. Two non-identical subunits are generated from the proenzyme in this reaction, and the pyruvate is formed at the N-terminus of the alpha chain, which is derived from the carboxyl end of the proenzyme. The autoendoproteolytic cleavage occurs by a canonical serine protease mechanism, in which the side chain hydroxyl group of the serine supplies its oxygen atom to form the C-terminus of the beta chain, while the remainder of the serine residue undergoes an oxidative deamination to produce ammonia and the pyruvoyl prosthetic group on the alpha chain. During this reaction, the Ser that is part of the protease active site of the proenzyme becomes the pyruvoyl prosthetic group, which constitutes an essential element of the active site of the mature decarboxylase.

It localises to the mitochondrion. Its subcellular location is the mitochondrion inner membrane. It catalyses the reaction a 1,2-diacyl-sn-glycero-3-phospho-L-serine + H(+) = a 1,2-diacyl-sn-glycero-3-phosphoethanolamine + CO2. It participates in phospholipid metabolism; phosphatidylethanolamine biosynthesis; phosphatidylethanolamine from CDP-diacylglycerol: step 2/2. Catalyzes the formation of phosphatidylethanolamine (PtdEtn) from phosphatidylserine (PtdSer). Plays a central role in phospholipid metabolism and in the interorganelle trafficking of phosphatidylserine. Together with psd2 and psd3, responsible for the majority of phosphatidylethanolamine synthesis. The polypeptide is Phosphatidylserine decarboxylase proenzyme 1, mitochondrial (Schizosaccharomyces pombe (strain 972 / ATCC 24843) (Fission yeast)).